Here is a 57-residue protein sequence, read N- to C-terminus: Large ribosomal subunit protein bL32c (57 aa).

This sequence belongs to the bacterial ribosomal protein bL32 family.

The protein resides in the plastid. The protein localises to the chloroplast. In Amborella trichopoda, this protein is Large ribosomal subunit protein bL32c.